Reading from the N-terminus, the 476-residue chain is Aspartyl/glutamyl-tRNA(Asn/Gln) amidotransferase subunit B (476 aa).

This sequence belongs to the GatB/GatE family. GatB subfamily. In terms of assembly, heterotrimer of A, B and C subunits.

The catalysed reaction is L-glutamyl-tRNA(Gln) + L-glutamine + ATP + H2O = L-glutaminyl-tRNA(Gln) + L-glutamate + ADP + phosphate + H(+). The enzyme catalyses L-aspartyl-tRNA(Asn) + L-glutamine + ATP + H2O = L-asparaginyl-tRNA(Asn) + L-glutamate + ADP + phosphate + 2 H(+). In terms of biological role, allows the formation of correctly charged Asn-tRNA(Asn) or Gln-tRNA(Gln) through the transamidation of misacylated Asp-tRNA(Asn) or Glu-tRNA(Gln) in organisms which lack either or both of asparaginyl-tRNA or glutaminyl-tRNA synthetases. The reaction takes place in the presence of glutamine and ATP through an activated phospho-Asp-tRNA(Asn) or phospho-Glu-tRNA(Gln). The polypeptide is Aspartyl/glutamyl-tRNA(Asn/Gln) amidotransferase subunit B (Geobacillus kaustophilus (strain HTA426)).